A 31-amino-acid chain; its full sequence is Cytochrome b6-f complex subunit 6 (31 aa).

Residues 3–23 (TLTSYFGFLLVALTITLVLFI) traverse the membrane as a helical segment.

It belongs to the PetL family. As to quaternary structure, the 4 large subunits of the cytochrome b6-f complex are cytochrome b6, subunit IV (17 kDa polypeptide, PetD), cytochrome f and the Rieske protein, while the 4 small subunits are PetG, PetL, PetM and PetN. The complex functions as a dimer.

It localises to the plastid. The protein resides in the chloroplast thylakoid membrane. In terms of biological role, component of the cytochrome b6-f complex, which mediates electron transfer between photosystem II (PSII) and photosystem I (PSI), cyclic electron flow around PSI, and state transitions. PetL is important for photoautotrophic growth as well as for electron transfer efficiency and stability of the cytochrome b6-f complex. The polypeptide is Cytochrome b6-f complex subunit 6 (Populus alba (White poplar)).